The primary structure comprises 260 residues: Indole-3-glycerol phosphate synthase (260 aa).

This sequence belongs to the TrpC family.

The enzyme catalyses 1-(2-carboxyphenylamino)-1-deoxy-D-ribulose 5-phosphate + H(+) = (1S,2R)-1-C-(indol-3-yl)glycerol 3-phosphate + CO2 + H2O. It participates in amino-acid biosynthesis; L-tryptophan biosynthesis; L-tryptophan from chorismate: step 4/5. The chain is Indole-3-glycerol phosphate synthase from Staphylococcus aureus (strain COL).